A 180-amino-acid chain; its full sequence is Large ribosomal subunit protein uL5c (180 aa).

Belongs to the universal ribosomal protein uL5 family. Part of the 50S ribosomal subunit; contacts the 5S rRNA.

The protein resides in the plastid. The protein localises to the chloroplast. Its function is as follows. Binds 5S rRNA, forms part of the central protuberance of the 50S subunit. The polypeptide is Large ribosomal subunit protein uL5c (rpl5) (Chlorella vulgaris (Green alga)).